The primary structure comprises 208 residues: Recombination protein RecR (208 aa).

Residues 57–72 form a C4-type zinc finger; it reads CALCNTLTEQEVCVTC. A Toprim domain is found at 80–187; that stretch reads SKLCVVETPA…QVTRLARGVP (108 aa).

The protein belongs to the RecR family.

Its function is as follows. May play a role in DNA repair. It seems to be involved in an RecBC-independent recombinational process of DNA repair. It may act with RecF and RecO. The chain is Recombination protein RecR from Polaromonas naphthalenivorans (strain CJ2).